We begin with the raw amino-acid sequence, 432 residues long: Peptidyl-prolyl cis-trans isomerase cyp6 (432 aa).

One can recognise a PPIase cyclophilin-type domain in the interval 1-168 (MSVLIETTVG…RDIRIKHTII (168 aa)). The residue at position 206 (S206) is a Phosphoserine. In terms of domain architecture, RRM spans 244 to 322 (NVLFVCKLNP…SRIHVDFSQS (79 aa)). The disordered stretch occupies residues 330-432 (YNSNRDRKRS…DRRYRDDRYR (103 aa)). Basic and acidic residues-rich tracts occupy residues 341–366 (SRSD…DDYR), 373–395 (DHRD…DDRS), and 406–432 (NCDD…DRYR).

This sequence belongs to the cyclophilin-type PPIase family. PPIL4 subfamily.

The protein resides in the nucleus. The catalysed reaction is [protein]-peptidylproline (omega=180) = [protein]-peptidylproline (omega=0). Its function is as follows. PPIases accelerate the folding of proteins. It catalyzes the cis-trans isomerization of proline imidic peptide bonds in oligopeptides. This chain is Peptidyl-prolyl cis-trans isomerase cyp6 (cyp6), found in Schizosaccharomyces pombe (strain 972 / ATCC 24843) (Fission yeast).